Here is a 421-residue protein sequence, read N- to C-terminus: UDP-N-acetylglucosamine 1-carboxyvinyltransferase 2 (421 aa).

Residue 22-23 (KN) coordinates phosphoenolpyruvate. R95 is a binding site for UDP-N-acetyl-alpha-D-glucosamine. The Proton donor role is filled by C119. C119 is subject to 2-(S-cysteinyl)pyruvic acid O-phosphothioketal. UDP-N-acetyl-alpha-D-glucosamine is bound by residues 124–128 (RPIEQ), D308, and V330.

It belongs to the EPSP synthase family. MurA subfamily.

Its subcellular location is the cytoplasm. It catalyses the reaction phosphoenolpyruvate + UDP-N-acetyl-alpha-D-glucosamine = UDP-N-acetyl-3-O-(1-carboxyvinyl)-alpha-D-glucosamine + phosphate. The protein operates within cell wall biogenesis; peptidoglycan biosynthesis. Functionally, cell wall formation. Adds enolpyruvyl to UDP-N-acetylglucosamine. The chain is UDP-N-acetylglucosamine 1-carboxyvinyltransferase 2 from Staphylococcus haemolyticus (strain JCSC1435).